The chain runs to 341 residues: S-adenosylmethionine:tRNA ribosyltransferase-isomerase (341 aa).

It belongs to the QueA family. In terms of assembly, monomer.

Its subcellular location is the cytoplasm. It catalyses the reaction 7-aminomethyl-7-carbaguanosine(34) in tRNA + S-adenosyl-L-methionine = epoxyqueuosine(34) in tRNA + adenine + L-methionine + 2 H(+). It participates in tRNA modification; tRNA-queuosine biosynthesis. In terms of biological role, transfers and isomerizes the ribose moiety from AdoMet to the 7-aminomethyl group of 7-deazaguanine (preQ1-tRNA) to give epoxyqueuosine (oQ-tRNA). The protein is S-adenosylmethionine:tRNA ribosyltransferase-isomerase of Staphylococcus aureus (strain USA300).